A 467-amino-acid chain; its full sequence is 3-isopropylmalate dehydratase large subunit (467 aa).

[4Fe-4S] cluster-binding residues include Cys347, Cys407, and Cys410.

It belongs to the aconitase/IPM isomerase family. LeuC type 1 subfamily. Heterodimer of LeuC and LeuD. The cofactor is [4Fe-4S] cluster.

The enzyme catalyses (2R,3S)-3-isopropylmalate = (2S)-2-isopropylmalate. The protein operates within amino-acid biosynthesis; L-leucine biosynthesis; L-leucine from 3-methyl-2-oxobutanoate: step 2/4. Catalyzes the isomerization between 2-isopropylmalate and 3-isopropylmalate, via the formation of 2-isopropylmaleate. This is 3-isopropylmalate dehydratase large subunit from Synechococcus sp. (strain JA-2-3B'a(2-13)) (Cyanobacteria bacterium Yellowstone B-Prime).